Reading from the N-terminus, the 57-residue chain is UPF0391 membrane protein RPC_2356 (57 aa).

The next 2 membrane-spanning stretches (helical) occupy residues 6–26 and 35–55; these read WALI…TGIS and ILFY…LTIF.

It belongs to the UPF0391 family.

It is found in the cell membrane. The sequence is that of UPF0391 membrane protein RPC_2356 from Rhodopseudomonas palustris (strain BisB18).